Here is a 202-residue protein sequence, read N- to C-terminus: Ion-translocating oxidoreductase complex subunit G (202 aa).

The chain crosses the membrane as a helical span at residues 11–31 (AILLALIALICTALSTGIYLL). Position 177 is an FMN phosphoryl threonine (Thr-177).

The protein belongs to the RnfG family. The complex is composed of six subunits: RnfA, RnfB, RnfC, RnfD, RnfE and RnfG. It depends on FMN as a cofactor.

The protein localises to the cell inner membrane. Functionally, part of a membrane-bound complex that couples electron transfer with translocation of ions across the membrane. The sequence is that of Ion-translocating oxidoreductase complex subunit G from Pasteurella multocida (strain Pm70).